The primary structure comprises 483 residues: ATP-dependent RNA helicase DDX25 (483 aa).

The short motif at 61–74 (LAANSLLNKLIRQS) is the Nuclear export signal element. Residues 97–125 (KTFEELRLKEELLKGIYAMGFNRPSKIQE) carry the Q motif motif. Positions 100–114 (EELRLKEELLKGIYA) match the Nuclear localization signal motif. In terms of domain architecture, Helicase ATP-binding spans 130-300 (MMLAHPPQNL…ERIIPDPNVI (171 aa)). An ATP-binding site is contributed by 143 to 150 (SQSGTGKT). Positions 247–250 (DEAD) match the DEAD box motif. Residues 311 to 478 (NIRQYYVLCG…QLDPEDMDEI (168 aa)) form the Helicase C-terminal domain.

The protein belongs to the DEAD box helicase family. Phosphorylated on threonine residues. The phosphorylated form is found in the cytoplasm but not in the nucleus.

Its subcellular location is the cytoplasm. The protein localises to the nucleus. The catalysed reaction is ATP + H2O = ADP + phosphate + H(+). ATP-dependent RNA helicase. Required for mRNA export and translation regulation during spermatid development. In Bos taurus (Bovine), this protein is ATP-dependent RNA helicase DDX25 (DDX25).